Consider the following 171-residue polypeptide: Small ribosomal subunit protein uS5 (171 aa).

The S5 DRBM domain occupies 15–78 (LKDRLVAINR…EAAKKNLTRV (64 aa)).

It belongs to the universal ribosomal protein uS5 family. As to quaternary structure, part of the 30S ribosomal subunit. Contacts proteins S4 and S8.

Its function is as follows. With S4 and S12 plays an important role in translational accuracy. Functionally, located at the back of the 30S subunit body where it stabilizes the conformation of the head with respect to the body. The sequence is that of Small ribosomal subunit protein uS5 from Phocaeicola vulgatus (strain ATCC 8482 / DSM 1447 / JCM 5826 / CCUG 4940 / NBRC 14291 / NCTC 11154) (Bacteroides vulgatus).